A 78-amino-acid chain; its full sequence is Small ribosomal subunit protein bS18 (78 aa).

This sequence belongs to the bacterial ribosomal protein bS18 family. As to quaternary structure, part of the 30S ribosomal subunit. Forms a tight heterodimer with protein bS6.

Its function is as follows. Binds as a heterodimer with protein bS6 to the central domain of the 16S rRNA, where it helps stabilize the platform of the 30S subunit. The sequence is that of Small ribosomal subunit protein bS18 from Kineococcus radiotolerans (strain ATCC BAA-149 / DSM 14245 / SRS30216).